Here is an 873-residue protein sequence, read N- to C-terminus: Tyrosine-protein kinase receptor TYRO3 (873 aa).

The signal sequence occupies residues 1–28; that stretch reads MELRRSMALPRLLLLGLWAAALRDGAVA. Ig-like C2-type domains lie at 29-116 and 127-208; these read AGMK…KEES and PYFT…ATVQ. Over 29–416 the chain is Extracellular; the sequence is AGMKFTGSPI…QRQPPYGTSW (388 aa). An N-linked (GlcNAc...) asparagine glycan is attached at Asn51. Disulfide bonds link Cys52–Cys105 and Cys148–Cys191. Asn179, Asn184, Asn218, Asn228, Asn281, Asn353, and Asn367 each carry an N-linked (GlcNAc...) asparagine glycan. Fibronectin type-III domains follow at residues 215–308 and 310–403; these read PPLN…TLEL and PSST…AQEV. Residues 417-437 form a helical membrane-spanning segment; that stretch reads VPVALGILTALVTAVALALIL. The Cytoplasmic portion of the chain corresponds to 438 to 873; sequence LRKRRKETRF…ELETEGEKSC (436 aa). The Protein kinase domain occupies 505-776; that stretch reads FTLGRMLGKG…GVLRSQLEMI (272 aa). ATP-binding positions include 511–519 and Lys537; that span reads LGKGEFGSV. Catalysis depends on Asp642, which acts as the Proton acceptor. Tyr673 bears the Phosphotyrosine; by autocatalysis mark. The tract at residues 845–873 is disordered; that stretch reads VEGERHPEGQEGENKSLLYELETEGEKSC. The span at 847–858 shows a compositional bias: basic and acidic residues; it reads GERHPEGQEGEN.

Belongs to the protein kinase superfamily. Tyr protein kinase family. AXL/UFO subfamily. Autophosphorylated on tyrosine residues. Detected in embryonic retina (at protein level). detected in brain, retina, kidney and in retinal Mueller glia-like cells.

The protein resides in the cell membrane. The enzyme catalyses L-tyrosyl-[protein] + ATP = O-phospho-L-tyrosyl-[protein] + ADP + H(+). In terms of biological role, receptor tyrosine kinase that transduces signals from the extracellular matrix into the cytoplasm by binding to several ligands. Regulates many physiological processes including cell survival, migration and differentiation. Ligand binding at the cell surface induces dimerization and autophosphorylation of TYRO3 on its intracellular domain that provides docking sites for downstream signaling molecules. Following activation by ligand, enhances PI3-kinase activity and activates the AKT survival pathway, including nuclear translocation of NF-kappa-B and up-regulation of transcription of NF-kappa-B-regulated genes. In Gallus gallus (Chicken), this protein is Tyrosine-protein kinase receptor TYRO3 (TYRO3).